An 861-amino-acid chain; its full sequence is Leucine--tRNA ligase (861 aa).

Positions proline 42 to histidine 52 match the 'HIGH' region motif. Positions lysine 619–serine 623 match the 'KMSKS' region motif. Lysine 622 serves as a coordination point for ATP.

The protein belongs to the class-I aminoacyl-tRNA synthetase family.

It localises to the cytoplasm. The catalysed reaction is tRNA(Leu) + L-leucine + ATP = L-leucyl-tRNA(Leu) + AMP + diphosphate. This Haemophilus influenzae (strain PittGG) protein is Leucine--tRNA ligase.